Consider the following 134-residue polypeptide: Arsenate reductase (134 aa).

Active-site nucleophile residues include cysteine 11, cysteine 83, and cysteine 90. 2 disulfide bridges follow: cysteine 11–cysteine 83 and cysteine 83–cysteine 90.

This sequence belongs to the low molecular weight phosphotyrosine protein phosphatase family. Thioredoxin-coupled ArsC subfamily.

The protein localises to the cytoplasm. It catalyses the reaction arsenate + [thioredoxin]-dithiol + H(+) = arsenite + [thioredoxin]-disulfide + H2O. Its function is as follows. Catalyzes the reduction of arsenate [As(V)] to arsenite [As(III)]. In Bacillus cereus (strain ATCC 14579 / DSM 31 / CCUG 7414 / JCM 2152 / NBRC 15305 / NCIMB 9373 / NCTC 2599 / NRRL B-3711), this protein is Arsenate reductase.